A 231-amino-acid polypeptide reads, in one-letter code: Ribose-5-phosphate isomerase A (231 aa).

Substrate is bound by residues 28–31 (TGST), 83–86 (DGAD), and 96–99 (KGGG). Glu-105 (proton acceptor) is an active-site residue. A substrate-binding site is contributed by Lys-123.

The protein belongs to the ribose 5-phosphate isomerase family. Homodimer.

The enzyme catalyses aldehydo-D-ribose 5-phosphate = D-ribulose 5-phosphate. The protein operates within carbohydrate degradation; pentose phosphate pathway; D-ribose 5-phosphate from D-ribulose 5-phosphate (non-oxidative stage): step 1/1. In terms of biological role, catalyzes the reversible conversion of ribose-5-phosphate to ribulose 5-phosphate. This Parvibaculum lavamentivorans (strain DS-1 / DSM 13023 / NCIMB 13966) protein is Ribose-5-phosphate isomerase A.